A 139-amino-acid chain; its full sequence is Small ribosomal subunit protein uS9 (139 aa).

This sequence belongs to the universal ribosomal protein uS9 family.

The chain is Small ribosomal subunit protein uS9 from Coxiella burnetii (strain CbuK_Q154) (Coxiella burnetii (strain Q154)).